Reading from the N-terminus, the 56-residue chain is Large ribosomal subunit protein bL32 (56 aa).

A compositionally biased stretch (basic residues) spans 1 to 16; sequence MAVQKNRKTRSKRGMR. Positions 1–28 are disordered; it reads MAVQKNRKTRSKRGMRRSHDALTTAALS.

Belongs to the bacterial ribosomal protein bL32 family.

The sequence is that of Large ribosomal subunit protein bL32 from Vibrio campbellii (strain ATCC BAA-1116).